The following is a 444-amino-acid chain: uncharacterized protein (444 aa).

A chloroplast-targeting transit peptide spans 1–72; that stretch reads MGFLTAAIRV…RPMWNVSFLR (72 aa). Positions 77–107 are disordered; it reads HSTPARETGDDDISKSENSSSQDGDSCTKLK. Residues 92–101 are compositionally biased toward polar residues; it reads SENSSSQDGD. Positions 175–272 constitute a CRM domain; sequence EILTPEEHFY…KNYVQPPTEI (98 aa). Residues 292 to 355 are a coiled coil; the sequence is DALRAVRKYI…CLEDEQEEDE (64 aa). Disordered regions lie at residues 344-364 and 392-426; these read EECL…ATDS and KFPA…PNFD. The span at 346-357 shows a compositional bias: acidic residues; it reads CLEDEQEEDEAG. Over residues 406–426 the composition is skewed to basic and acidic residues; it reads DLGKAKSEGEENDDDKSPNFD.

The protein resides in the plastid. It is found in the chloroplast. This is an uncharacterized protein from Arabidopsis thaliana (Mouse-ear cress).